The chain runs to 633 residues: Biosynthetic arginine decarboxylase (633 aa).

Lysine 101 carries the post-translational modification N6-(pyridoxal phosphate)lysine. 284-294 (VDVGGGLGVDY) contributes to the substrate binding site.

This sequence belongs to the Orn/Lys/Arg decarboxylase class-II family. SpeA subfamily. Mg(2+) serves as cofactor. It depends on pyridoxal 5'-phosphate as a cofactor.

It catalyses the reaction L-arginine + H(+) = agmatine + CO2. It functions in the pathway amine and polyamine biosynthesis; agmatine biosynthesis; agmatine from L-arginine: step 1/1. Functionally, catalyzes the biosynthesis of agmatine from arginine. The sequence is that of Biosynthetic arginine decarboxylase from Aeromonas salmonicida (strain A449).